A 316-amino-acid chain; its full sequence is 4-hydroxy-3-methylbut-2-enyl diphosphate reductase (316 aa).

Position 12 (Cys-12) interacts with [4Fe-4S] cluster. (2E)-4-hydroxy-3-methylbut-2-enyl diphosphate-binding residues include His-43 and His-81. His-43 and His-81 together coordinate dimethylallyl diphosphate. Isopentenyl diphosphate-binding residues include His-43 and His-81. A [4Fe-4S] cluster-binding site is contributed by Cys-103. His-131 contacts (2E)-4-hydroxy-3-methylbut-2-enyl diphosphate. His-131 contacts dimethylallyl diphosphate. His-131 contacts isopentenyl diphosphate. Glu-133 (proton donor) is an active-site residue. Thr-170 contacts (2E)-4-hydroxy-3-methylbut-2-enyl diphosphate. Cys-198 contributes to the [4Fe-4S] cluster binding site. 3 residues coordinate (2E)-4-hydroxy-3-methylbut-2-enyl diphosphate: Ser-226, Asn-228, and Ser-271. Residues Ser-226, Asn-228, and Ser-271 each contribute to the dimethylallyl diphosphate site. Positions 226, 228, and 271 each coordinate isopentenyl diphosphate.

It belongs to the IspH family. The cofactor is [4Fe-4S] cluster.

It catalyses the reaction isopentenyl diphosphate + 2 oxidized [2Fe-2S]-[ferredoxin] + H2O = (2E)-4-hydroxy-3-methylbut-2-enyl diphosphate + 2 reduced [2Fe-2S]-[ferredoxin] + 2 H(+). The enzyme catalyses dimethylallyl diphosphate + 2 oxidized [2Fe-2S]-[ferredoxin] + H2O = (2E)-4-hydroxy-3-methylbut-2-enyl diphosphate + 2 reduced [2Fe-2S]-[ferredoxin] + 2 H(+). It participates in isoprenoid biosynthesis; dimethylallyl diphosphate biosynthesis; dimethylallyl diphosphate from (2E)-4-hydroxy-3-methylbutenyl diphosphate: step 1/1. Its pathway is isoprenoid biosynthesis; isopentenyl diphosphate biosynthesis via DXP pathway; isopentenyl diphosphate from 1-deoxy-D-xylulose 5-phosphate: step 6/6. In terms of biological role, catalyzes the conversion of 1-hydroxy-2-methyl-2-(E)-butenyl 4-diphosphate (HMBPP) into a mixture of isopentenyl diphosphate (IPP) and dimethylallyl diphosphate (DMAPP). Acts in the terminal step of the DOXP/MEP pathway for isoprenoid precursor biosynthesis. This is 4-hydroxy-3-methylbut-2-enyl diphosphate reductase from Bacillus cereus (strain AH820).